Consider the following 564-residue polypeptide: Isopullulanase (564 aa).

Positions 1–19 are cleaved as a signal peptide; that stretch reads MRSTGYLLTLSAAFQVAQA. Asn-24, Asn-94, Asn-115, Asn-138, Asn-186, Asn-210, Asn-305, Asn-381, Asn-448, Asn-455, Asn-460, Asn-486, Asn-491, Asn-503, and Asn-535 each carry an N-linked (GlcNAc...) asparagine glycan.

In terms of processing, N-glycosylated.

Its subcellular location is the secreted. The catalysed reaction is Hydrolysis of pullulan to isopanose (6-alpha-maltosylglucose).. In terms of biological role, hydrolyzes pullulan, a linear polymer which is composed of maltotriose units with alpha-1,6 glucosidic linkages, to produce isopanose (Glca1-4Glca1-6Glc). This chain is Isopullulanase (ipuA), found in Aspergillus niger.